Here is an 879-residue protein sequence, read N- to C-terminus: Valine--tRNA ligase (879 aa).

Positions 45-55 (PNVTGKLHLGH) match the 'HIGH' region motif. Positions 521–525 (KMSKS) match the 'KMSKS' region motif. K524 provides a ligand contact to ATP. A coiled-coil region spans residues 806-879 (LTELVNVDEE…ERMKELKESK (74 aa)).

It belongs to the class-I aminoacyl-tRNA synthetase family. ValS type 1 subfamily. Monomer.

It is found in the cytoplasm. The enzyme catalyses tRNA(Val) + L-valine + ATP = L-valyl-tRNA(Val) + AMP + diphosphate. Catalyzes the attachment of valine to tRNA(Val). As ValRS can inadvertently accommodate and process structurally similar amino acids such as threonine, to avoid such errors, it has a 'posttransfer' editing activity that hydrolyzes mischarged Thr-tRNA(Val) in a tRNA-dependent manner. In Lactobacillus johnsonii (strain CNCM I-12250 / La1 / NCC 533), this protein is Valine--tRNA ligase.